A 993-amino-acid chain; its full sequence is NACHT, LRR and PYD domains-containing protein 14 (993 aa).

In terms of domain architecture, NACHT spans 81–403; it reads QTVVLQGAAG…FYLLRENLEE (323 aa). An ATP-binding site is contributed by 87-94; that stretch reads GAAGIGKT. LRR repeat units lie at residues 636–657, 660–680, 688–708, 717–738, 745–765, 774–795, 802–822, 831–852, and 859–879; these read DLKE…LKCK, KLRV…QKLS, SLVF…KSLC, SLER…VLSS, RLTH…KLLS, TLQS…HLST, SLVH…KLLC, NLQE…DLAS, and NLWS…NILC.

It belongs to the NLRP family. In terms of tissue distribution, detected in adult ovary and testis. Detected in oocytes and in germ cell elements in seminiferous tubules in adult testis (at protein level).

It is found in the cytoplasm. Its function is as follows. May be involved in inflammation and spermatogenesis. The protein is NACHT, LRR and PYD domains-containing protein 14 (Nlrp14) of Mus musculus (Mouse).